A 67-amino-acid polypeptide reads, in one-letter code: MSKKCQVTGKKPITGHNVSHANNKTKRRFLPNIRTVRVTLPDGTKKKIKVSAKGLRILKKKNFQVDL.

This sequence belongs to the bacterial ribosomal protein bL28 family.

In Nitratiruptor sp. (strain SB155-2), this protein is Large ribosomal subunit protein bL28.